Here is a 779-residue protein sequence, read N- to C-terminus: Protocadherin beta-8 (779 aa).

An N-terminal signal peptide occupies residues 1-28 (METALTKTPEKRQVIFLAILLLLWEASS). Topologically, residues 29–690 (EAISYSMPEE…QEEDMLTLYL (662 aa)) are extracellular. Cadherin domains follow at residues 75-133 (LQLD…FPEF), 134-242 (PDTE…APQF), 243-346 (LQSL…APKL), 347-450 (TISS…APAF), and 451-560 (TQTS…APFV). A disulfide bridge connects residues Cys-96 and Cys-102. N-linked (GlcNAc...) asparagine glycosylation occurs at Asn-169. Ser-223 carries O-linked (Man) serine glycosylation. Thr-225 and Thr-227 each carry an O-linked (Man) threonine glycan. An N-linked (GlcNAc...) asparagine glycan is attached at Asn-417. An N-linked (GlcNAc...) asparagine glycan is attached at Asn-566. The 101-residue stretch at 575–675 (LPRAAEPGYL…SQPYLPLPEV (101 aa)) folds into the Cadherin 6 domain. The helical transmembrane segment at 691–711 (VIALASVSSLFLLSVLLFVGV) threads the bilayer. The Cytoplasmic portion of the chain corresponds to 712–779 (KLCKKAREAS…IIPSSLLQDS (68 aa)).

Forms homodimers in trans (molecules expressed by two different cells). Forms promiscuous heterodimers in cis (at the plasma membrane of the same cell) with other protocadherins.

It localises to the cell membrane. In terms of biological role, calcium-dependent cell-adhesion protein involved in cells self-recognition and non-self discrimination. Thereby, it is involved in the establishment and maintenance of specific neuronal connections in the brain. The sequence is that of Protocadherin beta-8 from Mus musculus (Mouse).